Consider the following 334-residue polypeptide: Holliday junction branch migration complex subunit RuvB (334 aa).

The segment at 1–180 is large ATPase domain (RuvB-L); sequence MSEFLTPERT…FGIILELDFY (180 aa). ATP is bound by residues L19, R20, G61, K64, T65, T66, 127–129, R170, Y180, and R217; that span reads EDF. T65 provides a ligand contact to Mg(2+). The tract at residues 181–251 is small ATPAse domain (RuvB-S); it reads TVKELKEIIK…IVLKTMEVLN (71 aa). The tract at residues 254–334 is head domain (RuvB-H); it reads AEGLDEFDRK…KYEVPENRLF (81 aa). The DNA site is built by R309 and R314.

It belongs to the RuvB family. In terms of assembly, homohexamer. Forms an RuvA(8)-RuvB(12)-Holliday junction (HJ) complex. HJ DNA is sandwiched between 2 RuvA tetramers; dsDNA enters through RuvA and exits via RuvB. An RuvB hexamer assembles on each DNA strand where it exits the tetramer. Each RuvB hexamer is contacted by two RuvA subunits (via domain III) on 2 adjacent RuvB subunits; this complex drives branch migration. In the full resolvosome a probable DNA-RuvA(4)-RuvB(12)-RuvC(2) complex forms which resolves the HJ.

The protein localises to the cytoplasm. The catalysed reaction is ATP + H2O = ADP + phosphate + H(+). Its function is as follows. The RuvA-RuvB-RuvC complex processes Holliday junction (HJ) DNA during genetic recombination and DNA repair, while the RuvA-RuvB complex plays an important role in the rescue of blocked DNA replication forks via replication fork reversal (RFR). RuvA specifically binds to HJ cruciform DNA, conferring on it an open structure. The RuvB hexamer acts as an ATP-dependent pump, pulling dsDNA into and through the RuvAB complex. RuvB forms 2 homohexamers on either side of HJ DNA bound by 1 or 2 RuvA tetramers; 4 subunits per hexamer contact DNA at a time. Coordinated motions by a converter formed by DNA-disengaged RuvB subunits stimulates ATP hydrolysis and nucleotide exchange. Immobilization of the converter enables RuvB to convert the ATP-contained energy into a lever motion, pulling 2 nucleotides of DNA out of the RuvA tetramer per ATP hydrolyzed, thus driving DNA branch migration. The RuvB motors rotate together with the DNA substrate, which together with the progressing nucleotide cycle form the mechanistic basis for DNA recombination by continuous HJ branch migration. Branch migration allows RuvC to scan DNA until it finds its consensus sequence, where it cleaves and resolves cruciform DNA. The polypeptide is Holliday junction branch migration complex subunit RuvB (Thermotoga petrophila (strain ATCC BAA-488 / DSM 13995 / JCM 10881 / RKU-1)).